A 393-amino-acid chain; its full sequence is MLRYLTAGESHGPQLTAIIEGMPAGVPLLAEDINRELARRQQGYGRGDRMKIEKDQVEILSGVRWGETLASPLTLVVKNRDWENWSTKMSSLPEFRDESQAVTRPRPGHADLGGALKYGHRDLRNILERSSARETAVRVAVGAAAKALLRLFGIRVGGVVREVGGVVATDPAASFEYIWASAGQSPLFCCDGAAEQEMKRLIDDAKGSGDTLGGVVEVQVIGVPPGLGSHVQWDRKLDARLAMALMSIQAIKGVEVGIGFETARRPGSQVHDEIFRDAARTGADSGGAYYRTSNNAGGIEGGMSNGEAIILRAAMKPIPTLYKPLRSVDMLTHEPFQAAVERSDTCAVPAALVVAEAVVAVEIANAFLEKFGGDSVQEIRRNYQGYCERIRTL.

Residues Arg40 and Arg46 each contribute to the NADP(+) site. FMN-binding positions include 129–131 (RSS), 249–250 (QA), Gly301, 316–320 (KPIPT), and Arg342.

This sequence belongs to the chorismate synthase family. As to quaternary structure, homotetramer. FMNH2 is required as a cofactor.

The enzyme catalyses 5-O-(1-carboxyvinyl)-3-phosphoshikimate = chorismate + phosphate. It participates in metabolic intermediate biosynthesis; chorismate biosynthesis; chorismate from D-erythrose 4-phosphate and phosphoenolpyruvate: step 7/7. Functionally, catalyzes the anti-1,4-elimination of the C-3 phosphate and the C-6 proR hydrogen from 5-enolpyruvylshikimate-3-phosphate (EPSP) to yield chorismate, which is the branch point compound that serves as the starting substrate for the three terminal pathways of aromatic amino acid biosynthesis. This reaction introduces a second double bond into the aromatic ring system. The protein is Chorismate synthase of Pelobacter propionicus (strain DSM 2379 / NBRC 103807 / OttBd1).